Consider the following 159-residue polypeptide: NADH-quinone oxidoreductase subunit B (159 aa).

Residues Cys36, Cys37, Cys102, and Cys132 each contribute to the [4Fe-4S] cluster site.

This sequence belongs to the complex I 20 kDa subunit family. NDH-1 is composed of 14 different subunits. Subunits NuoB, C, D, E, F, and G constitute the peripheral sector of the complex. [4Fe-4S] cluster is required as a cofactor.

It is found in the cell inner membrane. It carries out the reaction a quinone + NADH + 5 H(+)(in) = a quinol + NAD(+) + 4 H(+)(out). NDH-1 shuttles electrons from NADH, via FMN and iron-sulfur (Fe-S) centers, to quinones in the respiratory chain. The immediate electron acceptor for the enzyme in this species is believed to be ubiquinone. Couples the redox reaction to proton translocation (for every two electrons transferred, four hydrogen ions are translocated across the cytoplasmic membrane), and thus conserves the redox energy in a proton gradient. In Acidovorax ebreus (strain TPSY) (Diaphorobacter sp. (strain TPSY)), this protein is NADH-quinone oxidoreductase subunit B.